The chain runs to 193 residues: Potassium-transporting ATPase KdpC subunit (193 aa).

A helical transmembrane segment spans residues 8–28 (VVLLIFLTLITGVAYPLLATG).

This sequence belongs to the KdpC family. In terms of assembly, the system is composed of three essential subunits: KdpA, KdpB and KdpC.

It localises to the cell inner membrane. In terms of biological role, part of the high-affinity ATP-driven potassium transport (or Kdp) system, which catalyzes the hydrolysis of ATP coupled with the electrogenic transport of potassium into the cytoplasm. This subunit acts as a catalytic chaperone that increases the ATP-binding affinity of the ATP-hydrolyzing subunit KdpB by the formation of a transient KdpB/KdpC/ATP ternary complex. This Photorhabdus laumondii subsp. laumondii (strain DSM 15139 / CIP 105565 / TT01) (Photorhabdus luminescens subsp. laumondii) protein is Potassium-transporting ATPase KdpC subunit.